We begin with the raw amino-acid sequence, 170 residues long: Flavodoxin (170 aa).

One can recognise a Flavodoxin-like domain in the interval 4-165 (IGLFYGTQTG…RIKTWVSQLK (162 aa)).

This sequence belongs to the flavodoxin family. Requires FMN as cofactor.

Low-potential electron donor to a number of redox enzymes. In Synechococcus elongatus (strain ATCC 33912 / PCC 7942 / FACHB-805) (Anacystis nidulans R2), this protein is Flavodoxin (isiB).